The sequence spans 287 residues: Protoheme IX farnesyltransferase (287 aa).

8 helical membrane-spanning segments follow: residues 9–29 (IVTM…SATL), 31–51 (LIDW…AGAA), 94–114 (IILW…TWLI), 132–152 (VGAI…GGTL), 158–178 (WMLF…IAWL), 202–222 (AWQS…LAWF), 228–248 (VASA…WPLL), and 267–287 (LRWS…RASL).

This sequence belongs to the UbiA prenyltransferase family. Protoheme IX farnesyltransferase subfamily.

The protein localises to the cell inner membrane. It catalyses the reaction heme b + (2E,6E)-farnesyl diphosphate + H2O = Fe(II)-heme o + diphosphate. Its pathway is porphyrin-containing compound metabolism; heme O biosynthesis; heme O from protoheme: step 1/1. Converts heme B (protoheme IX) to heme O by substitution of the vinyl group on carbon 2 of heme B porphyrin ring with a hydroxyethyl farnesyl side group. The protein is Protoheme IX farnesyltransferase of Rhodopirellula baltica (strain DSM 10527 / NCIMB 13988 / SH1).